The primary structure comprises 225 residues: Guanylate kinase (225 aa).

A Guanylate kinase-like domain is found at 20–198 (GNLFMVVAPS…ALSELQCLVA (179 aa)). An ATP-binding site is contributed by 27 to 34 (APSGAGKS).

Belongs to the guanylate kinase family.

It localises to the cytoplasm. It carries out the reaction GMP + ATP = GDP + ADP. Its function is as follows. Essential for recycling GMP and indirectly, cGMP. The protein is Guanylate kinase of Paraburkholderia xenovorans (strain LB400).